A 145-amino-acid polypeptide reads, in one-letter code: 3-dehydroquinate dehydratase (145 aa).

Catalysis depends on Y22, which acts as the Proton acceptor. Substrate contacts are provided by N71, H77, and D84. H97 functions as the Proton donor in the catalytic mechanism. Substrate is bound by residues 98–99 (LS) and R108.

It belongs to the type-II 3-dehydroquinase family. Homododecamer.

It catalyses the reaction 3-dehydroquinate = 3-dehydroshikimate + H2O. It participates in metabolic intermediate biosynthesis; chorismate biosynthesis; chorismate from D-erythrose 4-phosphate and phosphoenolpyruvate: step 3/7. Catalyzes a trans-dehydration via an enolate intermediate. This chain is 3-dehydroquinate dehydratase, found in Francisella tularensis subsp. tularensis (strain WY96-3418).